Reading from the N-terminus, the 620-residue chain is Chaperone protein HscA homolog (620 aa).

Belongs to the heat shock protein 70 family.

Its function is as follows. Chaperone involved in the maturation of iron-sulfur cluster-containing proteins. Has a low intrinsic ATPase activity which is markedly stimulated by HscB. The protein is Chaperone protein HscA homolog of Shewanella piezotolerans (strain WP3 / JCM 13877).